Consider the following 599-residue polypeptide: MSTGFSFGSGTLGSTTVAAGGTSTGGVFSFGTGASSNPSVGLNFGNLGSTSTPATTSAPSSGFGTGLFGSKPATGFTLGGTNTGIATTITTGLTLGTPATTSAATTGFSLGFNKPAASATPFALPITSTSASGLTLSSALTSTPAASTGFTLNNLGGTTATTTTASTGLSLGGALAGLGGSLFQSTNTGTSGLGQNALGLTLGTTAATSTAGNEGLGGIDFSSSSDKKSDKTGTRPEDSKALKDENLPPVICQDVENLQKFVKEQKQVQEEISRMSSKAMLKVQEDIKALKQLLSLAANGIQRNTLNIDKLKIETAQELKNAEIALRTQKTPPGLQHEYAAPADYFRILVQQFEVQLQQYRQQIEELENHLATQANNSHITPQDLSMAMQKIYQTFVALAAQLQSIHENVKVLKEQYLGYRKMFLGDAVDVFETRRAEAKKWQNTPRVTTGPTPFSTMPNAAAVAMAATLTQQQQPATGPQPSLGVSFGTPFGSGIGTGLQSSGLGSSNLGGFGTSSGFGCSTTGASTFGFGTTNKPSGSLSAGFGSSSTSGFNFSNPGITASAGLTFGVSNPASAGFGTGGQLLQLKKPPAGNKRGKR.

5 repeat units span residues 7-8 (FG), 30-31 (FG), 44-45 (FG), 63-64 (FG), and 68-69 (FG). The 14 X 2 AA repeats of F-G stretch occupies residues 7-579 (FGSGTLGSTT…VSNPASAGFG (573 aa)). Positions 213 to 247 (NEGLGGIDFSSSSDKKSDKTGTRPEDSKALKDENL) are disordered. Over residues 225–246 (SDKKSDKTGTRPEDSKALKDEN) the composition is skewed to basic and acidic residues. 2 coiled-coil regions span residues 256–276 (ENLQKFVKEQKQVQEEISRMS) and 314–381 (ETAQ…SHIT). Position 331 is a phosphothreonine (T331). 9 repeat units span residues 488–489 (FG), 492–493 (FG), 513–514 (FG), 519–520 (FG), 529–530 (FG), 531–532 (FG), 545–546 (FG), 568–569 (FG), and 578–579 (FG). The tract at residues 579 to 599 (GTGGQLLQLKKPPAGNKRGKR) is disordered.

Belongs to the NUP58 family. Component of the p62 complex, a complex at least composed of NUP62, NUP54, and NUP58. Interacts with NUTF2. Interacts with SRP1-alpha and Importin p97 proteins when they are together, but not with SRP1-alpha protein alone. O-glycosylated.

The protein resides in the nucleus. The protein localises to the nuclear pore complex. It localises to the nucleus membrane. Its function is as follows. Component of the nuclear pore complex, a complex required for the trafficking across the nuclear membrane. This is Nucleoporin p58/p45 from Homo sapiens (Human).